Consider the following 653-residue polypeptide: Choline transporter-like protein 1 (653 aa).

G2 is lipidated: N-myristoyl glycine. At G2–P29 the chain is on the cytoplasmic side. A helical membrane pass occupies residues W30–A50. The Mitochondrial intermembrane portion of the chain corresponds to T51–K211. A helical transmembrane segment spans residues E212–I232. Over R233–R237 the chain is Cytoplasmic. A helical membrane pass occupies residues V238–L258. Residues W259–A287 lie on the Mitochondrial intermembrane side of the membrane. Residues L288 to V308 form a helical membrane-spanning segment. Topologically, residues M309–A314 are cytoplasmic. The chain crosses the membrane as a helical span at residues L315–F335. Topologically, residues Q336–P337 are mitochondrial intermembrane. A helical transmembrane segment spans residues F338–L358. Topologically, residues G359 to P379 are cytoplasmic. A helical transmembrane segment spans residues L380 to A400. Residues C401–D536 are Mitochondrial intermembrane-facing. A helical transmembrane segment spans residues F537 to L557. At L558–T565 the chain is on the cytoplasmic side. The chain crosses the membrane as a helical span at residues V566–L586. Over S587 to R653 the chain is Mitochondrial intermembrane.

It belongs to the CTL (choline transporter-like) family. In terms of tissue distribution, specifically abundant in skeletal muscle (at protein level).

It localises to the cell membrane. The protein localises to the mitochondrion outer membrane. It carries out the reaction choline(out) + n H(+)(in) = choline(in) + n H(+)(out). The enzyme catalyses ethanolamine(out) + n H(+)(in) = ethanolamine(in) + n H(+)(out). Choline/H+ antiporter. Also acts as a high-affinity ethanolamine/H+ antiporter, regulating the supply of extracellular ethanolamine (Etn) for the CDP-Etn pathway, redistribute intracellular Etn and balance the CDP-Cho and CDP-Etn arms of the Kennedy pathway. Involved in membrane synthesis and myelin production. In Mus musculus (Mouse), this protein is Choline transporter-like protein 1 (Slc44a1).